A 123-amino-acid polypeptide reads, in one-letter code: Large ribosomal subunit protein uL29 (123 aa).

Belongs to the universal ribosomal protein uL29 family. In terms of assembly, component of the large ribosomal subunit.

It is found in the cytoplasm. Component of the large ribosomal subunit. The ribosome is a large ribonucleoprotein complex responsible for the synthesis of proteins in the cell. Plays an essential role in early embryonic development. May act as a haploinsufficient tumor suppressor. This chain is Large ribosomal subunit protein uL29 (rpl35), found in Danio rerio (Zebrafish).